A 141-amino-acid polypeptide reads, in one-letter code: Hemoglobin subunit beta (141 aa).

Positions 2–141 (HWSEVELHEI…VVDAISKEYH (140 aa)) constitute a Globin domain. Heme b is bound by residues H58 and H87.

This sequence belongs to the globin family. In terms of assembly, heterotetramer of two alpha chains and two beta chains. Red blood cells.

Its function is as follows. Involved in oxygen transport from the lung to the various peripheral tissues. The polypeptide is Hemoglobin subunit beta (HBB) (Heterodontus portusjacksoni (Port Jackson shark)).